A 102-amino-acid chain; its full sequence is Protamine-2 (102 aa).

Residues Ser8, Ser10, and Ser37 each carry the phosphoserine modification. Residues 16-102 (VYGQQLRGQE…RTRRRRCRRH (87 aa)) form a disordered region. Positions 49-102 (GHSHYRRRHCSRRRLHRIHRQQHRSCGRRRRRSCRQRRRHRRGCRTRRRRCRRH) are enriched in basic residues.

It belongs to the protamine P2 family. In terms of assembly, interacts with TDRP. Proteolytic processing into mature chains is required for histone eviction during spermatogenesis. Transition proteins (TNP1 and TNP2) are required for processing. In terms of tissue distribution, testis.

The protein resides in the nucleus. It is found in the chromosome. Protamines substitute for histones in the chromatin of sperm during the haploid phase of spermatogenesis. They compact sperm DNA into a highly condensed, stable and inactive complex. This chain is Protamine-2 (PRM2), found in Hylobates lar (Lar gibbon).